The primary structure comprises 298 residues: 4-diphosphocytidyl-2-C-methyl-D-erythritol kinase (298 aa).

Lysine 15 is a catalytic residue. 100 to 110 lines the ATP pocket; sequence PIAAGIGGGSA. Aspartate 142 is an active-site residue.

The protein belongs to the GHMP kinase family. IspE subfamily.

The enzyme catalyses 4-CDP-2-C-methyl-D-erythritol + ATP = 4-CDP-2-C-methyl-D-erythritol 2-phosphate + ADP + H(+). The protein operates within isoprenoid biosynthesis; isopentenyl diphosphate biosynthesis via DXP pathway; isopentenyl diphosphate from 1-deoxy-D-xylulose 5-phosphate: step 3/6. Functionally, catalyzes the phosphorylation of the position 2 hydroxy group of 4-diphosphocytidyl-2C-methyl-D-erythritol. The protein is 4-diphosphocytidyl-2-C-methyl-D-erythritol kinase of Rhodopseudomonas palustris (strain BisA53).